Here is a 119-residue protein sequence, read N- to C-terminus: Large ribosomal subunit protein uL22 (119 aa).

Belongs to the universal ribosomal protein uL22 family. In terms of assembly, part of the 50S ribosomal subunit.

Functionally, this protein binds specifically to 23S rRNA; its binding is stimulated by other ribosomal proteins, e.g. L4, L17, and L20. It is important during the early stages of 50S assembly. It makes multiple contacts with different domains of the 23S rRNA in the assembled 50S subunit and ribosome. Its function is as follows. The globular domain of the protein is located near the polypeptide exit tunnel on the outside of the subunit, while an extended beta-hairpin is found that lines the wall of the exit tunnel in the center of the 70S ribosome. In Bifidobacterium longum (strain DJO10A), this protein is Large ribosomal subunit protein uL22.